Here is a 464-residue protein sequence, read N- to C-terminus: Soluble pyridine nucleotide transhydrogenase (464 aa).

D35–C44 is a binding site for FAD.

This sequence belongs to the class-I pyridine nucleotide-disulfide oxidoreductase family. The cofactor is FAD.

It localises to the cytoplasm. The enzyme catalyses NAD(+) + NADPH = NADH + NADP(+). Functionally, conversion of NADPH, generated by peripheral catabolic pathways, to NADH, which can enter the respiratory chain for energy generation. This chain is Soluble pyridine nucleotide transhydrogenase, found in Azotobacter vinelandii (strain DJ / ATCC BAA-1303).